The chain runs to 103 residues: Small ribosomal subunit protein uS10 (103 aa).

This sequence belongs to the universal ribosomal protein uS10 family. As to quaternary structure, part of the 30S ribosomal subunit.

Functionally, involved in the binding of tRNA to the ribosomes. In Acidovorax sp. (strain JS42), this protein is Small ribosomal subunit protein uS10.